We begin with the raw amino-acid sequence, 263 residues long: tRNA1(Val) (adenine(37)-N6)-methyltransferase (263 aa).

It belongs to the methyltransferase superfamily. tRNA (adenine-N(6)-)-methyltransferase family.

Its subcellular location is the cytoplasm. It carries out the reaction adenosine(37) in tRNA1(Val) + S-adenosyl-L-methionine = N(6)-methyladenosine(37) in tRNA1(Val) + S-adenosyl-L-homocysteine + H(+). Specifically methylates the adenine in position 37 of tRNA(1)(Val) (anticodon cmo5UAC). This is tRNA1(Val) (adenine(37)-N6)-methyltransferase from Salmonella choleraesuis (strain SC-B67).